A 301-amino-acid chain; its full sequence is Ornithine carbamoyltransferase (301 aa).

Carbamoyl phosphate is bound by residues Arg-107 and 134 to 137 (HPLQ). L-ornithine-binding positions include Asn-165, Asp-220, and 224–225 (SM). Carbamoyl phosphate-binding positions include 260 to 261 (CL) and Arg-288.

It belongs to the aspartate/ornithine carbamoyltransferase superfamily. OTCase family. As to quaternary structure, homotrimer.

It localises to the cytoplasm. The catalysed reaction is carbamoyl phosphate + L-ornithine = L-citrulline + phosphate + H(+). The protein operates within amino-acid biosynthesis; L-arginine biosynthesis; L-arginine from L-ornithine and carbamoyl phosphate: step 1/3. Inhibited by delta-N-phosphonoacetyl-L-ornithine. In terms of biological role, reversibly catalyzes the transfer of the carbamoyl group from carbamoyl phosphate (CP) to the N(epsilon) atom of ornithine (ORN) to produce L-citrulline, which is a substrate for argininosuccinate synthetase, the enzyme involved in the final step in arginine biosynthesis. This chain is Ornithine carbamoyltransferase, found in Thermus thermophilus (strain ATCC BAA-163 / DSM 7039 / HB27).